An 85-amino-acid chain; its full sequence is Putative membrane protein insertion efficiency factor (85 aa).

The protein belongs to the UPF0161 family.

The protein resides in the cell membrane. Could be involved in insertion of integral membrane proteins into the membrane. Its function is as follows. Lyses fish blood cells. The chain is Putative membrane protein insertion efficiency factor (hlyA) from Aeromonas hydrophila.